The following is a 425-amino-acid chain: Probable sucrose-phosphatase 3a (425 aa).

The protein belongs to the sucrose phosphatase family. Homodimer. Requires Mg(2+) as cofactor.

It carries out the reaction sucrose 6(F)-phosphate + H2O = sucrose + phosphate. It participates in glycan biosynthesis; sucrose biosynthesis; sucrose from D-fructose 6-phosphate and UDP-alpha-D-glucose: step 2/2. Functionally, catalyzes the final step of sucrose synthesis. This is Probable sucrose-phosphatase 3a (SPP3A) from Arabidopsis thaliana (Mouse-ear cress).